The sequence spans 192 residues: Large ribosomal subunit protein bL9 (192 aa).

The interval 173–192 is disordered; the sequence is ALRPEDFFDPEADGVDEDEA. Residues 179 to 192 are compositionally biased toward acidic residues; that stretch reads FFDPEADGVDEDEA.

This sequence belongs to the bacterial ribosomal protein bL9 family.

Its function is as follows. Binds to the 23S rRNA. The polypeptide is Large ribosomal subunit protein bL9 (rplI) (Rhizobium leguminosarum bv. trifolii).